The chain runs to 828 residues: Periplasmic nitrate reductase (828 aa).

A signal peptide (tat-type signal) is located at residues 1–32 (MNLSRRDFMKANAAMAAATAAGLSIPVKNVEA). In terms of domain architecture, 4Fe-4S Mo/W bis-MGD-type spans 37 to 93 (IKWDKAVCRFCGTGCAVLVGTKDGRVVASQGDPDAEVNRGLNCIKGYFLPKIMYGKD). [4Fe-4S] cluster is bound by residues Cys44, Cys47, Cys51, and Cys79. Residues Lys81, Gln148, Asn173, Cys177, 210–217 (WGSNMAEM), 241–245 (STFEH), Met371, Gln375, Asn481, 507–508 (SD), Lys530, Asp557, and 717–726 (TGRVLEHWHT) contribute to the Mo-bis(molybdopterin guanine dinucleotide) site. Substrate is bound at residue Phe793. The Mo-bis(molybdopterin guanine dinucleotide) site is built by Asn801 and Lys818.

This sequence belongs to the prokaryotic molybdopterin-containing oxidoreductase family. NasA/NapA/NarB subfamily. Component of the periplasmic nitrate reductase NapAB complex composed of NapA and NapB. Requires [4Fe-4S] cluster as cofactor. Mo-bis(molybdopterin guanine dinucleotide) serves as cofactor. Predicted to be exported by the Tat system. The position of the signal peptide cleavage has not been experimentally proven.

It localises to the periplasm. The enzyme catalyses 2 Fe(II)-[cytochrome] + nitrate + 2 H(+) = 2 Fe(III)-[cytochrome] + nitrite + H2O. Its function is as follows. Catalytic subunit of the periplasmic nitrate reductase complex NapAB. Receives electrons from NapB and catalyzes the reduction of nitrate to nitrite. This Aggregatibacter actinomycetemcomitans (Actinobacillus actinomycetemcomitans) protein is Periplasmic nitrate reductase.